Reading from the N-terminus, the 70-residue chain is Conotoxin Cal6.11 (70 aa).

The first 22 residues, 1–22 (MKLTCVLIIAVLILTACQFIAA), serve as a signal peptide directing secretion. A propeptide spanning residues 23 to 43 (DNTEYRKWRRSGTSTGMRLGS) is cleaved from the precursor. Disulfide bonds link Cys-46/Cys-57, Cys-50/Cys-62, and Cys-56/Cys-69. Residues Pro-48 and Pro-58 each carry the 4-hydroxyproline modification. Residues Glu-60 and Glu-67 each carry the 4-carboxyglutamate modification.

Belongs to the conotoxin O1 superfamily. In terms of tissue distribution, expressed by the venom duct.

The protein localises to the secreted. In terms of biological role, probable neurotoxin with unknown target. Possibly targets ion channels. In Californiconus californicus (California cone), this protein is Conotoxin Cal6.11.